The sequence spans 375 residues: Dihydroorotate dehydrogenase (quinone) (375 aa).

FMN contacts are provided by residues 78–82 (AGLDK) and Thr102. A substrate-binding site is contributed by Lys82. Substrate is bound at residue 127–131 (NRMGF). Positions 159 and 192 each coordinate FMN. Substrate is bound at residue Asn192. The Nucleophile role is filled by Ser195. A substrate-binding site is contributed by Asn197. FMN contacts are provided by Lys230 and Thr258. 259-260 (NT) provides a ligand contact to substrate. FMN-binding positions include Gly288, Gly317, and 338–339 (YT).

This sequence belongs to the dihydroorotate dehydrogenase family. Type 2 subfamily. Monomer. FMN serves as cofactor.

The protein resides in the cell membrane. It catalyses the reaction (S)-dihydroorotate + a quinone = orotate + a quinol. The protein operates within pyrimidine metabolism; UMP biosynthesis via de novo pathway; orotate from (S)-dihydroorotate (quinone route): step 1/1. Catalyzes the conversion of dihydroorotate to orotate with quinone as electron acceptor. This is Dihydroorotate dehydrogenase (quinone) from Cyanothece sp. (strain PCC 7425 / ATCC 29141).